An 876-amino-acid chain; its full sequence is Probable galactinol--sucrose galactosyltransferase 4 (876 aa).

2 positions are modified to phosphoserine: serine 7 and serine 9.

It belongs to the glycosyl hydrolases 36 family.

It catalyses the reaction alpha-D-galactosyl-(1-&gt;3)-1D-myo-inositol + sucrose = raffinose + myo-inositol. Its function is as follows. Transglycosidase operating by a ping-pong reaction mechanism. Involved in the synthesis of raffinose, a major soluble carbohydrate in seeds, roots and tubers. In Arabidopsis thaliana (Mouse-ear cress), this protein is Probable galactinol--sucrose galactosyltransferase 4 (RFS4).